The primary structure comprises 74 residues: MIQPQTRLNVADNSGARELMCIRIIGASNRRYAHIGDIIVARRNPKGTRVFGAIAHELRELSFTKIVSLAPEVL.

The protein belongs to the universal ribosomal protein uL14 family. Part of the 50S ribosomal subunit.

Its subcellular location is the plastid. The protein localises to the chloroplast. Its function is as follows. Binds to 23S rRNA. The sequence is that of Large ribosomal subunit protein uL14c (rpl14) from Oenothera ammophila (Evening primerose).